Consider the following 151-residue polypeptide: Lipoprotein signal peptidase (151 aa).

3 helical membrane passes run 33–53 (VIPDFFHLTYVLNPGAAFGLL), 58–78 (WIFIPAAIIVCAGIIYAQFKI), and 87–107 (LTLGLIGGGALGNLYDRLFIG). Residues D111 and D126 contribute to the active site. A helical transmembrane segment spans residues 120–140 (FVFNFADSAIVVGVGLLMILM).

Belongs to the peptidase A8 family.

The protein resides in the cell membrane. It catalyses the reaction Release of signal peptides from bacterial membrane prolipoproteins. Hydrolyzes -Xaa-Yaa-Zaa-|-(S,diacylglyceryl)Cys-, in which Xaa is hydrophobic (preferably Leu), and Yaa (Ala or Ser) and Zaa (Gly or Ala) have small, neutral side chains.. The protein operates within protein modification; lipoprotein biosynthesis (signal peptide cleavage). Its function is as follows. This protein specifically catalyzes the removal of signal peptides from prolipoproteins. The protein is Lipoprotein signal peptidase of Desulfitobacterium hafniense (strain DSM 10664 / DCB-2).